We begin with the raw amino-acid sequence, 552 residues long: MTTSADQTDVLVIGSGPGGAGVTLKLVQAGYKVTCLEQGPWVTPPEHPHYHREWEIEKQRGWAYDPNVRGLPEDYPVTGFTTPYLMNNVGGSTMHYAGHWPRYKPVDFRKGTEHGLEGTIDWPISYEELAPYYDENDAIYGISGMVGDPSYPDRTGVDRDPPVKPGKLGRNFAQALGDLGWHWWPSDNAIITRPREGREADIAAGNELSGSPTGSLSTPTHTHWPTAIALGADLRTHARVEQIHTKNGKATGATYIDTRTGARHEINAKIVVVSASGIGTPRLLLMSAQKGHPDGLANSNGLVGKYLMHHILRVLASVVRTSRMEGYKGAFGAPLYSHEFYHTDTNRGFVNGFGMQVARSFGAAYTAMGSHTGYVAPWGKSHRKFFNEHFGNHLMVFMFGEDLPVETNCVTLDPDAKDSSGLPAARVNWEPHENDIALANYGIDRIFEAARALGAVETNDTGVLNPPPGWHLMGTCRMGNNPEDSVTNKWHQTWDVPNLFVVDGSSLTTGGAVNPTSTIGALAVRAGDYISRRFSDIVDQRTTPSNEDAPAI.

This sequence belongs to the GMC oxidoreductase family. FAD is required as a cofactor.

It is found in the cytoplasm. It carries out the reaction 2-methylpropane-1,2-diol + NAD(+) = 2-hydroxy-2-methylpropanal + NADH + H(+). In terms of biological role, involved in the degradation of methyl tert-butyl ether (MTBE). Catalyzes the conversion of 2-methyl 1,2-propanediol (2-M1,2-PD) to hydroxyisobutyraldehyde. The polypeptide is 2-methyl-1,2-propanediol dehydrogenase (Mycolicibacterium austroafricanum (Mycobacterium austroafricanum)).